Reading from the N-terminus, the 896-residue chain is Zinc finger protein 574 (896 aa).

2 consecutive C2H2-type zinc fingers follow at residues Tyr-16–His-38 and Tyr-76–His-98. At Ser-113 the chain carries Phosphoserine. The segment at Tyr-126–His-148 adopts a C2H2-type 3 zinc-finger fold. Phosphoserine is present on Ser-164. Residues Tyr-214–His-236 form a C2H2-type 4 zinc finger. The tract at residues Ala-239 to Ala-301 is disordered. Over residues Pro-247 to Ser-257 the composition is skewed to polar residues. Residues His-274–Asp-287 are compositionally biased toward basic and acidic residues. Ser-298 carries the phosphoserine modification. 4 C2H2-type zinc fingers span residues Leu-309–His-331, Phe-336–His-358, Phe-364–His-386, and His-392–His-413. A disordered region spans residues Phe-434–Pro-460. The C2H2-type 9 zinc-finger motif lies at Tyr-466–His-489. A C2H2-type 10; degenerate zinc finger spans residues His-495–His-517. 4 consecutive C2H2-type zinc fingers follow at residues Phe-523–His-545, Tyr-551–His-573, Tyr-579–His-601, and Tyr-607–His-630. A C2H2-type 15; degenerate zinc finger spans residues His-636–Ala-659. The C2H2-type 16 zinc finger occupies Phe-667–His-689. The tract at residues Ala-687–Ala-733 is disordered. Residues Ala-707–Pro-732 show a composition bias toward low complexity. Phosphoserine is present on Ser-717. Thr-724 is subject to Phosphothreonine. Ser-728 carries the phosphoserine modification. 4 C2H2-type zinc fingers span residues Leu-738–His-760, Tyr-766–His-788, Phe-794–His-816, and Tyr-822–His-844. Residue Arg-832 is modified to Asymmetric dimethylarginine.

This sequence belongs to the krueppel C2H2-type zinc-finger protein family.

The protein resides in the nucleus. Its function is as follows. May be involved in transcriptional regulation. This chain is Zinc finger protein 574 (ZNF574), found in Homo sapiens (Human).